Reading from the N-terminus, the 1720-residue chain is 6-methylcalicylic acide synthase (1720 aa).

The disordered stretch occupies residues 1 to 31 (MDKQSASGEIPAMRWEPYHRRDPRNAKELSK). The 399-residue stretch at 1 to 399 (MDKQSASGEI…GTVSHAVIEQ (399 aa)) folds into the Ketosynthase family 3 (KS3) domain. Over residues 16–30 (EPYHRRDPRNAKELS) the composition is skewed to basic and acidic residues. Residues C146, H281, and H321 each act as for beta-ketoacyl synthase activity in the active site. The malonyl-CoA:ACP transacylase (MAT) domain stretch occupies residues 509–823 (VWVFSGHGAQ…IAQLHCRGAE (315 aa)). The segment at 868-987 (HTLLGQRIGI…AYWARDIQEA (120 aa)) is N-terminal hotdog fold. Positions 868–1139 (HTLLGQRIGI…FTAMRFSEIE (272 aa)) are dehydratase (DH) domain. The PKS/mFAS DH domain maps to 868 to 1144 (HTLLGQRIGI…FSEIEGTPGV (277 aa)). The active-site Proton acceptor; for dehydratase activity is H900. Residues 1001–1144 (GTRIRDDFSI…FSEIEGTPGV (144 aa)) are C-terminal hotdog fold. D1065 serves as the catalytic Proton donor; for dehydratase activity. Positions 1148–1545 (MESLVHQLAW…AVAVQWTSWR (398 aa)) are product template (PT) domain. The Carrier domain maps to 1644–1718 (VYLDEKIRGC…HLVGWFAEKV (75 aa)). Residue S1678 is modified to O-(pantetheine 4'-phosphoryl)serine.

It localises to the cytoplasm. Its subcellular location is the cytosol. It carries out the reaction 3 malonyl-CoA + acetyl-CoA + NADPH + 3 H(+) = 6-methylsalicylate + 3 CO2 + NADP(+) + 4 CoA + H2O. Its pathway is mycotoxin biosynthesis; patulin biosynthesis. Its function is as follows. 6-methylsalicylic acid synthase; part of the gene cluster that mediates the biosynthesis of patulin, an acetate-derived tetraketide mycotoxin produced by several fungal species that shows antimicrobial properties against several bacteria. PatK catalyzes the first step of the pathway which is the synthesis of 6-methylsalicylic acid via condensation of 1 acetate and 3 malonate units. The pathway begins with the synthesis of 6-methylsalicylic acid by the polyketide synthase (PKS) patK via condensation of acetate and malonate units. The 6-methylsalicylic acid decarboxylase patG then catalyzes the decarboxylation of 6-methylsalicylic acid to yield m-cresol (also known as 3-methylphenol). These first reactions occur in the cytosol. The intermediate m-cresol is then transported into the endoplasmic reticulum where the cytochrome P450 monooxygenase patH converts it to m-hydroxybenzyl alcohol, which is further converted to gentisyl alcohol by the cytochrome P450 monooxygenase patI. The oxidoreductases patJ and patO further convert gentisyl alcohol to isoepoxydon in the vacuole. PatN catalyzes then the transformation of isoepoxydon into phyllostine. The cluster protein patF is responsible for the conversion from phyllostine to neopatulin whereas the alcohol dehydrogenase patD converts neopatulin to E-ascladiol. The steps between isoepoxydon and E-ascladiol occur in the cytosol, and E-ascladiol is probably secreted to the extracellular space by one of the cluster-specific transporters patC or patM. Finally, the secreted patulin synthase patE catalyzes the conversion of E-ascladiol to patulin. This Aspergillus clavatus (strain ATCC 1007 / CBS 513.65 / DSM 816 / NCTC 3887 / NRRL 1 / QM 1276 / 107) protein is 6-methylcalicylic acide synthase.